Reading from the N-terminus, the 315-residue chain is Putative purine nucleoside phosphorylase (315 aa).

Phosphate contacts are provided by residues serine 49, histidine 81, 103–105 (RYH), and alanine 135. An a purine D-ribonucleoside-binding site is contributed by glutamate 220. Serine 239 contacts phosphate. Asparagine 262 serves as a coordination point for a purine D-ribonucleoside.

It belongs to the PNP/MTAP phosphorylase family.

The protein resides in the cytoplasm. It localises to the nucleus. It catalyses the reaction a purine D-ribonucleoside + phosphate = a purine nucleobase + alpha-D-ribose 1-phosphate. It participates in purine metabolism; purine nucleoside salvage. The purine nucleoside phosphorylases catalyze the phosphorolytic breakdown of the N-glycosidic bond in the beta-(deoxy)ribonucleoside molecules, with the formation of the corresponding free purine bases and pentose-1-phosphate. Cleaves guanosine and inosine. The polypeptide is Putative purine nucleoside phosphorylase (Schizosaccharomyces pombe (strain 972 / ATCC 24843) (Fission yeast)).